The sequence spans 384 residues: 8-amino-7-oxononanoate synthase (384 aa).

Arg21 is a binding site for substrate. 108 to 109 (GF) provides a ligand contact to pyridoxal 5'-phosphate. His133 lines the substrate pocket. Residues Ser179, His207, and Thr233 each coordinate pyridoxal 5'-phosphate. Lys236 bears the N6-(pyridoxal phosphate)lysine mark. Thr352 is a binding site for substrate.

It belongs to the class-II pyridoxal-phosphate-dependent aminotransferase family. BioF subfamily. Homodimer. Pyridoxal 5'-phosphate is required as a cofactor.

It carries out the reaction 6-carboxyhexanoyl-[ACP] + L-alanine + H(+) = (8S)-8-amino-7-oxononanoate + holo-[ACP] + CO2. The protein operates within cofactor biosynthesis; biotin biosynthesis. In terms of biological role, catalyzes the decarboxylative condensation of pimeloyl-[acyl-carrier protein] and L-alanine to produce 8-amino-7-oxononanoate (AON), [acyl-carrier protein], and carbon dioxide. This Escherichia coli O17:K52:H18 (strain UMN026 / ExPEC) protein is 8-amino-7-oxononanoate synthase.